A 322-amino-acid polypeptide reads, in one-letter code: Serine protease 38 (322 aa).

Positions 1–28 (MAALTSGLGVLGYLLFPLLLASPTWVTS) are cleaved as a signal peptide. A propeptide spans 29 to 55 (VSRRHPKSQANSLSGDVACGQPVLQGK) (activation peptide). Residues 56–289 (LLGGEFARDR…FLSWIRYHLQ (234 aa)) enclose the Peptidase S1 domain. The cysteines at positions 81 and 97 are disulfide-linked. Catalysis depends on charge relay system residues H96 and D146. Residue N176 is glycosylated (N-linked (GlcNAc...) asparagine). 3 cysteine pairs are disulfide-bonded: C179-C247, C210-C226, and C237-C265. Residue S241 is the Charge relay system of the active site. Residues N250 and N276 are each glycosylated (N-linked (GlcNAc...) asparagine).

It belongs to the peptidase S1 family.

It is found in the secreted. This chain is Serine protease 38 (Prss38), found in Mus musculus (Mouse).